Consider the following 100-residue polypeptide: Urease subunit gamma (100 aa).

This sequence belongs to the urease gamma subunit family. As to quaternary structure, heterotrimer of UreA (gamma), UreB (beta) and UreC (alpha) subunits. Three heterotrimers associate to form the active enzyme.

It localises to the cytoplasm. The catalysed reaction is urea + 2 H2O + H(+) = hydrogencarbonate + 2 NH4(+). The protein operates within nitrogen metabolism; urea degradation; CO(2) and NH(3) from urea (urease route): step 1/1. This chain is Urease subunit gamma, found in Mycolicibacterium smegmatis (strain ATCC 700084 / mc(2)155) (Mycobacterium smegmatis).